Reading from the N-terminus, the 335-residue chain is Holliday junction branch migration complex subunit RuvB (335 aa).

The segment at 4-184 is large ATPase domain (RuvB-L); the sequence is ADRLVSAEVL…FGIVQRLEFY (181 aa). ATP contacts are provided by residues Ile23, Arg24, Gly65, Lys68, Thr69, Thr70, 131 to 133, Arg174, Tyr184, and Arg221; that span reads EDY. Residue Thr69 coordinates Mg(2+). The segment at 185–255 is small ATPAse domain (RuvB-S); sequence NVDDLQSIVS…IATRALDMLS (71 aa). Positions 258–335 are head domain (RuvB-H); it reads AAGFDYLDRK…RHFGMVRNQE (78 aa). Positions 294, 313, and 318 each coordinate DNA.

The protein belongs to the RuvB family. As to quaternary structure, homohexamer. Forms an RuvA(8)-RuvB(12)-Holliday junction (HJ) complex. HJ DNA is sandwiched between 2 RuvA tetramers; dsDNA enters through RuvA and exits via RuvB. An RuvB hexamer assembles on each DNA strand where it exits the tetramer. Each RuvB hexamer is contacted by two RuvA subunits (via domain III) on 2 adjacent RuvB subunits; this complex drives branch migration. In the full resolvosome a probable DNA-RuvA(4)-RuvB(12)-RuvC(2) complex forms which resolves the HJ.

The protein localises to the cytoplasm. The enzyme catalyses ATP + H2O = ADP + phosphate + H(+). Its function is as follows. The RuvA-RuvB-RuvC complex processes Holliday junction (HJ) DNA during genetic recombination and DNA repair, while the RuvA-RuvB complex plays an important role in the rescue of blocked DNA replication forks via replication fork reversal (RFR). RuvA specifically binds to HJ cruciform DNA, conferring on it an open structure. The RuvB hexamer acts as an ATP-dependent pump, pulling dsDNA into and through the RuvAB complex. RuvB forms 2 homohexamers on either side of HJ DNA bound by 1 or 2 RuvA tetramers; 4 subunits per hexamer contact DNA at a time. Coordinated motions by a converter formed by DNA-disengaged RuvB subunits stimulates ATP hydrolysis and nucleotide exchange. Immobilization of the converter enables RuvB to convert the ATP-contained energy into a lever motion, pulling 2 nucleotides of DNA out of the RuvA tetramer per ATP hydrolyzed, thus driving DNA branch migration. The RuvB motors rotate together with the DNA substrate, which together with the progressing nucleotide cycle form the mechanistic basis for DNA recombination by continuous HJ branch migration. Branch migration allows RuvC to scan DNA until it finds its consensus sequence, where it cleaves and resolves cruciform DNA. In Photorhabdus laumondii subsp. laumondii (strain DSM 15139 / CIP 105565 / TT01) (Photorhabdus luminescens subsp. laumondii), this protein is Holliday junction branch migration complex subunit RuvB.